Consider the following 155-residue polypeptide: Large ribosomal subunit protein uL22 (155 aa).

Belongs to the universal ribosomal protein uL22 family. In terms of assembly, part of the 50S ribosomal subunit.

This protein binds specifically to 23S rRNA. It makes multiple contacts with different domains of the 23S rRNA in the assembled 50S subunit and ribosome. Functionally, the globular domain of the protein is located near the polypeptide exit tunnel on the outside of the subunit, while an extended beta-hairpin is found that lines the wall of the exit tunnel in the center of the 70S ribosome. This is Large ribosomal subunit protein uL22 from Archaeoglobus fulgidus (strain ATCC 49558 / DSM 4304 / JCM 9628 / NBRC 100126 / VC-16).